Here is a 922-residue protein sequence, read N- to C-terminus: Band 3 anion transport protein (922 aa).

Disordered regions lie at residues 1–36 (MEGP…TMSN) and 355–389 (QHPD…LRTR). The Cytoplasmic segment spans residues 1–416 (MEGPGQDTED…LSDIRDALNP (416 aa)). Residues 10 to 26 (DALRRSLDPEGYEDTKG) show a composition bias toward basic and acidic residues. The span at 27–36 (SRTSLGTMSN) shows a compositional bias: polar residues. The helical transmembrane segment at 417-440 (QCLAAVIFIYFAALSPAITFGGLL) threads the bilayer. Residues 441 to 448 (GEKTRGMM) lie on the Extracellular side of the membrane. The chain crosses the membrane as a helical span at residues 449–469 (GVSELLLSTSVQCLLFSLLSA). The Cytoplasmic portion of the chain corresponds to 470-472 (QPL). Residues 473-489 (LVVGFSGPLLVFEEAFF) traverse the membrane as a discontinuously helical segment. Residues 490–498 (RFCEDHGLE) are Extracellular-facing. A helical membrane pass occupies residues 499–519 (YIVGRVWIGFWLILLVLLVVA). The Cytoplasmic portion of the chain corresponds to 520 to 531 (CEGTVLVRYLSR). The chain crosses the membrane as a helical span at residues 532–554 (YTQEIFSFLISLIFIYETFAKLV). Residues 555 to 581 (TIFEAHPLQQSYDTDVSTEPSVPKPNT) are Extracellular-facing. Residues 582–602 (ALLSLVLMAGTFFLALFLRQF) form a helical membrane-spanning segment. Residues 603–613 (KNSVFLPGKVR) are Cytoplasmic-facing. A helical transmembrane segment spans residues 614–634 (RLIGDFGVPISIFVMALADFF). Residues 635–674 (IKDTYTQKLKVPRGLEVTNGTARGWFIHPMGSATPFPIWM) lie on the Extracellular side of the membrane. N-linked (GlcNAc...) asparagine glycosylation is present at asparagine 653. The helical transmembrane segment at 675–695 (MFASPVPALLVFILIFLETQI) threads the bilayer. Residues 696 to 711 (TTLIVSKPERKLVKGS) are Cytoplasmic-facing. A helical transmembrane segment spans residues 712–730 (GFHLDLLLIVAMGGLAALF). A discontinuously helical membrane pass occupies residues 731-748 (GMPWLSATTVRTITHANA). Residues 749 to 771 (LTVVGKSAVPGERAHIVEVKEQR) lie on the Cytoplasmic side of the membrane. 2 helical membrane-spanning segments follow: residues 772–792 (LSGL…PILK) and 793–811 (YIPL…VTSL). Residues 812–849 (FGIQLFDRILLLLMPPKYHPKEPYVTRVKTWRITSSPL) lie on the Cytoplasmic side of the membrane. The discontinuously helical intramembrane region spans 850–880 (TQILVVALLWGVKVSPASLRCPFVLVLTVPL). Residues 881 to 922 (RRLLLPRIFSEIELKCLDTDDAVVTFEEAEGQDVYNEVQMPS) are Cytoplasmic-facing.

The protein belongs to the anion exchanger (TC 2.A.31) family. A dimer in solution, it spans the membrane asymmetrically and appears to be tetrameric. Erythrocytes.

Its subcellular location is the cell membrane. The protein resides in the basolateral cell membrane. It catalyses the reaction hydrogencarbonate(in) + chloride(out) = hydrogencarbonate(out) + chloride(in). Functions both as a transporter that mediates electroneutral anion exchange across the cell membrane and as a structural protein. Major integral membrane glycoprotein of the erythrocyte membrane; required for normal flexibility and stability of the erythrocyte membrane and for normal erythrocyte shape via the interactions of its cytoplasmic domain with cytoskeletal proteins, glycolytic enzymes, and hemoglobin. Functions as a transporter that mediates the 1:1 exchange of inorganic anions across the erythrocyte membrane. Mediates chloride-bicarbonate exchange in the kidney, and is required for normal acidification of the urine. The protein is Band 3 anion transport protein (SLC4A1) of Gallus gallus (Chicken).